We begin with the raw amino-acid sequence, 854 residues long: DNA mismatch repair protein MutS (854 aa).

ATP is bound at residue 614 to 621 (GPNMGGKS).

This sequence belongs to the DNA mismatch repair MutS family.

Its function is as follows. This protein is involved in the repair of mismatches in DNA. It is possible that it carries out the mismatch recognition step. This protein has a weak ATPase activity. In Sodalis glossinidius (strain morsitans), this protein is DNA mismatch repair protein MutS.